We begin with the raw amino-acid sequence, 294 residues long: Nucleotide-binding protein Reut_A0350 (294 aa).

G8–S15 contributes to the ATP binding site. D57–S60 serves as a coordination point for GTP.

It belongs to the RapZ-like family.

Functionally, displays ATPase and GTPase activities. The chain is Nucleotide-binding protein Reut_A0350 from Cupriavidus pinatubonensis (strain JMP 134 / LMG 1197) (Cupriavidus necator (strain JMP 134)).